Consider the following 112-residue polypeptide: Protein lin-52 homolog (112 aa).

It belongs to the lin-52 family. Component of the DREAM complex.

The chain is Protein lin-52 homolog (LIN52) from Gallus gallus (Chicken).